We begin with the raw amino-acid sequence, 234 residues long: Aspartate/glutamate leucyltransferase (234 aa).

It belongs to the R-transferase family. Bpt subfamily.

Its subcellular location is the cytoplasm. The enzyme catalyses N-terminal L-glutamyl-[protein] + L-leucyl-tRNA(Leu) = N-terminal L-leucyl-L-glutamyl-[protein] + tRNA(Leu) + H(+). It carries out the reaction N-terminal L-aspartyl-[protein] + L-leucyl-tRNA(Leu) = N-terminal L-leucyl-L-aspartyl-[protein] + tRNA(Leu) + H(+). Functionally, functions in the N-end rule pathway of protein degradation where it conjugates Leu from its aminoacyl-tRNA to the N-termini of proteins containing an N-terminal aspartate or glutamate. The sequence is that of Aspartate/glutamate leucyltransferase from Hahella chejuensis (strain KCTC 2396).